A 272-amino-acid polypeptide reads, in one-letter code: D-aminoacyl-tRNA deacylase (272 aa).

The protein belongs to the DtdA deacylase family. As to quaternary structure, monomer. The cofactor is Zn(2+).

It carries out the reaction a D-aminoacyl-tRNA + H2O = a tRNA + a D-alpha-amino acid + H(+). It catalyses the reaction glycyl-tRNA(Ala) + H2O = tRNA(Ala) + glycine + H(+). In terms of biological role, D-aminoacyl-tRNA deacylase with broad substrate specificity. By recycling D-aminoacyl-tRNA to D-amino acids and free tRNA molecules, this enzyme counteracts the toxicity associated with the formation of D-aminoacyl-tRNA entities in vivo. The sequence is that of D-aminoacyl-tRNA deacylase from Desulfurococcus amylolyticus (strain DSM 18924 / JCM 16383 / VKM B-2413 / 1221n) (Desulfurococcus kamchatkensis).